We begin with the raw amino-acid sequence, 81 residues long: MEGKPQRKQNKYKKKVCRFTADPELAKQINYKNIELLERFITNRGKIIPRRITGTSARYQRVLAREIRKARSIGLLPYKVN.

This sequence belongs to the bacterial ribosomal protein bS18 family. Part of the 30S ribosomal subunit. Forms a tight heterodimer with protein bS6.

Functionally, binds as a heterodimer with protein bS6 to the central domain of the 16S rRNA, where it helps stabilize the platform of the 30S subunit. This is Small ribosomal subunit protein bS18 from Leptospira borgpetersenii serovar Hardjo-bovis (strain JB197).